We begin with the raw amino-acid sequence, 222 residues long: MNAPITQKNTAYISSDKLSLLELENSNKFINLLMVDGKKSRAIRLFYDTLVLLKRKNLKENSKKESLLGIIGQLSPKNSIEDLVNNSNKLSNNSNEEIKIPLIDNSKSDDKSNLLETISVLEVLSIALKNVTPSVELRKVRRAGNTFLIPAILSQHKANTLAIRWVIESAKKKQQNSKQNFAECLADEIYQAYLKQGKARQKRDELHSAAISNRANIRYRWW.

This sequence belongs to the universal ribosomal protein uS7 family. Part of the small ribosomal subunit.

Its subcellular location is the mitochondrion. In terms of biological role, one of the primary rRNA binding proteins, it binds directly to 18S rRNA where it nucleates assembly of the head domain of the small subunit. This chain is Small ribosomal subunit protein uS7m (RPS7), found in Prototheca wickerhamii.